Here is a 489-residue protein sequence, read N- to C-terminus: MQSNIELVITDEKVQTRIIADKNILSENFPYFKAMFMYTEGQADYVCLHTQNVQVAHDLIVSCGNTSYKFQDKTWDYIFDLYKCRNFFGLDFIPLVDNTVPPEYIDKLIDTMEIIGYDYSTIKYIAHNLPKDYALNKLSIELLKSIQQILSEFYFLVENRNGLSMFDGVSKMCLKLFEFDFYSVEQMSYCYLNQTNRLVILDTNNILKIFDVQTLNVVAISSGNCFCNSIIYLESKNCIVGINSGGFEIYDAINLKLIGKINGPKQFDYVETSLIGKSSDDKYIIFQQAVETDYGYHYQLMIALVETGEIIGPIYNDKKEFSCICSPTQNIIIYGNYNNFTLWSLDSRSVIAELRLNVDPFKFVFIGFSLDGCYIIFVDSNAIAYIWSIVTKQFIRSNSTISMRNHKNPTYACNSYRQFNKEKFGLNNISILPNNNLVSTKGNCISIWNIMCQEPIESFNLPIDSFMSKIQVITNKRDLANKIRNFINS.

Residues 3-73 (SNIELVITDE…GNTSYKFQDK (71 aa)) form the BTB domain.

Belongs to the mimivirus BTB/WD family.

The polypeptide is Putative BTB/POZ domain-containing protein R773 (Acanthamoeba polyphaga (Amoeba)).